Consider the following 2188-residue polypeptide: Glutamate synthase 2 [NADH], chloroplastic (2188 aa).

The transit peptide at 1-30 directs the protein to the chloroplast; sequence MSAAQGLALKLRAAPAAGGVRGEKRRRAAS. Disordered stretches follow at residues 14–40 and 61–94; these read APAAGGVRGEKRRRAASATAAAAARPR and VAPRASASRQAEAGAGAGAARPPPRSMSKIPESS. The span at 65-80 shows a compositional bias: low complexity; it reads ASASRQAEAGAGAGAA. The active-site Nucleophile is the cysteine 107. Positions 107-511 constitute a Glutamine amidotransferase type-2 domain; that stretch reads CGVGFIAELS…PGMMLLVDFE (405 aa). 1198–1255 is a binding site for FMN; the sequence is LAETHQTLVANGLRGRAVLQTDGQMKTGRDVAVACLLGAEEFGFSTAPLITLGCIMMR. [3Fe-4S] cluster-binding residues include cysteine 1251, cysteine 1257, and cysteine 1262. An NAD(+)-binding site is contributed by 1974 to 1988; it reads GGGDTGTDCIGTSIR.

It belongs to the glutamate synthase family. As to quaternary structure, monomer. The cofactor is [3Fe-4S] cluster. FAD serves as cofactor. It depends on FMN as a cofactor. As to expression, expressed in leaf blades and sheaths.

It is found in the plastid. It localises to the chloroplast. The catalysed reaction is 2 L-glutamate + NAD(+) = L-glutamine + 2-oxoglutarate + NADH + H(+). Its pathway is amino-acid biosynthesis; L-glutamate biosynthesis via GLT pathway; L-glutamate from 2-oxoglutarate and L-glutamine (NAD(+) route): step 1/1. It participates in energy metabolism; nitrogen metabolism. In terms of biological role, involved in glutamate biosynthesis. The chain is Glutamate synthase 2 [NADH], chloroplastic from Oryza sativa subsp. japonica (Rice).